Reading from the N-terminus, the 240-residue chain is Phosphoribosylaminoimidazole-succinocarboxamide synthase (240 aa).

It belongs to the SAICAR synthetase family.

It catalyses the reaction 5-amino-1-(5-phospho-D-ribosyl)imidazole-4-carboxylate + L-aspartate + ATP = (2S)-2-[5-amino-1-(5-phospho-beta-D-ribosyl)imidazole-4-carboxamido]succinate + ADP + phosphate + 2 H(+). It functions in the pathway purine metabolism; IMP biosynthesis via de novo pathway; 5-amino-1-(5-phospho-D-ribosyl)imidazole-4-carboxamide from 5-amino-1-(5-phospho-D-ribosyl)imidazole-4-carboxylate: step 1/2. The sequence is that of Phosphoribosylaminoimidazole-succinocarboxamide synthase from Neorickettsia sennetsu (strain ATCC VR-367 / Miyayama) (Ehrlichia sennetsu).